The chain runs to 432 residues: Methylenetetrahydrofolate--tRNA-(uracil-5-)-methyltransferase TrmFO (432 aa).

7-12 lines the FAD pocket; that stretch reads GAGLAG.

The protein belongs to the MnmG family. TrmFO subfamily. It depends on FAD as a cofactor.

It is found in the cytoplasm. It carries out the reaction uridine(54) in tRNA + (6R)-5,10-methylene-5,6,7,8-tetrahydrofolate + NADH + H(+) = 5-methyluridine(54) in tRNA + (6S)-5,6,7,8-tetrahydrofolate + NAD(+). It catalyses the reaction uridine(54) in tRNA + (6R)-5,10-methylene-5,6,7,8-tetrahydrofolate + NADPH + H(+) = 5-methyluridine(54) in tRNA + (6S)-5,6,7,8-tetrahydrofolate + NADP(+). Catalyzes the folate-dependent formation of 5-methyl-uridine at position 54 (M-5-U54) in all tRNAs. The protein is Methylenetetrahydrofolate--tRNA-(uracil-5-)-methyltransferase TrmFO of Anoxybacillus flavithermus (strain DSM 21510 / WK1).